A 272-amino-acid polypeptide reads, in one-letter code: MSDHPGPGAVTPELFGVGGDWLAVTAGESGASVFRAADATRYAKCVPAADAAGLEAERDRIAWLSGQGVPGPRVLDWYAGDAGACLVTRAVPGVPADRVGADDLRTAWGAVADAVRRLHEVPVASCPFRRGLDSVVDAARDVVARGAVHPEFLPVEQRLVPPAELLARLTGELARRRDQEAADTVVCHGDLCLPNIVLHPETLEVSGFIDLGRLGAADRHADLALLLANARETWVDEERARFADAAFAERYGIAPDPERLRFYLHLDPLTWG.

The active-site Proton acceptor is the Asp-190.

Belongs to the aminoglycoside phosphotransferase family.

The catalysed reaction is streptomycin + ATP = streptomycin 3''-phosphate + ADP + H(+). Its function is as follows. The aminoglycoside phosphotransferases achieve inactivation of their antibiotic substrates by phosphorylation. The sequence is that of Streptomycin 3''-kinase (aphE) from Streptomyces griseus.